Here is a 393-residue protein sequence, read N- to C-terminus: Putative F-box protein At1g55070 (393 aa).

The region spanning 29–74 (GEYFDRIPADLVIKILSKLSAKSMAKCRCVCKLLSSIIRQPNYNQL) is the F-box domain.

The polypeptide is Putative F-box protein At1g55070 (Arabidopsis thaliana (Mouse-ear cress)).